The sequence spans 396 residues: D-alanine--D-alanine ligase (396 aa).

The ATP-grasp domain occupies 141-347 (KMLWQAAGLP…PQDLMAQLLS (207 aa)). Residue 174-229 (ETRLGYPLFVKPAQAGSSVGASAVQTRAPLIPAIEAAFQWDEVVLVERYVRAREIE) coordinates ATP. Residues Asp301, Glu314, and Asn316 each coordinate Mg(2+). A disordered region spans residues 374–396 (AAHDPDAQGDDWDQRDSNPLPTA).

The protein belongs to the D-alanine--D-alanine ligase family. Mg(2+) serves as cofactor. Requires Mn(2+) as cofactor.

The protein localises to the cytoplasm. It catalyses the reaction 2 D-alanine + ATP = D-alanyl-D-alanine + ADP + phosphate + H(+). The protein operates within cell wall biogenesis; peptidoglycan biosynthesis. Functionally, cell wall formation. In Treponema pallidum (strain Nichols), this protein is D-alanine--D-alanine ligase.